Here is a 173-residue protein sequence, read N- to C-terminus: Terpene cyclase subB (173 aa).

The next 4 membrane-spanning stretches (helical) occupy residues Pro-11–Trp-31, Ala-51–Phe-71, Leu-112–Leu-132, and Ala-141–Ser-161.

The protein belongs to the paxB family.

It is found in the membrane. The protein operates within secondary metabolite biosynthesis; terpenoid biosynthesis. Terpene cyclase; part of the gene cluster that mediates the biosynthesis of the immunosuppressants subglutinols, meroterpenoids consisting of an alpha-pyrone (4-hydroxy-5,6-dimethyl-2-pyrone) moiety attached to a decalin core fused to a five-membered cyclic ether carrying a prenylside chain. The first step of the pathway is the synthesis of the alpha-pyrone moiety by the polyketide synthase subA via condensation of one acetyl-CoA starter unit with 3 malonyl-CoA units and 2 methylations. The alpha-pyrone is then combined with geranylgeranyl pyrophosphate (GGPP) formed by the GGPP synthase subD through the action of the prenyltransferase subC to yield a linear alpha-pyrone diterpenoid. Subsequent steps in the subglutinol biosynthetic pathway involve the decalin core formation, which is thought to be initiated by the epoxidation of the C10-C11 olefin by the FAD-dependent oxidoreductase subE. The following cyclization cascade would be catalyzed by the terpene cyclase subB. Lastly, the FAD-dependent dehydrogenase subF probably catalyzes the five-membered cyclic ether formation to complete the formation of subglutinol A. Subsequent redox reactions appear to give rise to subglutinol C and D, however, it remains unclear which enzymes are responsible for these transformations. SubD may have secondary function in the conversion of the identified subglutinols to subglutinol analog 45, which seems to be the major product of the cluster. The chain is Terpene cyclase subB from Metarhizium robertsii (strain ARSEF 23 / ATCC MYA-3075) (Metarhizium anisopliae (strain ARSEF 23)).